The primary structure comprises 280 residues: Hydroxyacylglutathione hydrolase, mitochondrial (280 aa).

The residue at position 61 (K61) is an N6-acetyllysine. Zn(2+) contacts are provided by H74, H76, D78, and H79. Position 88 is an N6-acetyllysine (K88). H130 and D154 together coordinate Zn(2+). Substrate contacts are provided by residues K163 to Y165 and H193 to Y195. H193 serves as a coordination point for Zn(2+). Residue K201 is modified to N6-acetyllysine; alternate. K201 bears the N6-succinyllysine; alternate mark. R269–K272 contributes to the substrate binding site.

The protein belongs to the metallo-beta-lactamase superfamily. Glyoxalase II family. Monomer. Zn(2+) is required as a cofactor. As to expression, testis.

The protein localises to the mitochondrion matrix. Its subcellular location is the cytoplasm. The enzyme catalyses an S-(2-hydroxyacyl)glutathione + H2O = a 2-hydroxy carboxylate + glutathione + H(+). It carries out the reaction (R)-S-lactoylglutathione + H2O = (R)-lactate + glutathione + H(+). The protein operates within secondary metabolite metabolism; methylglyoxal degradation; (R)-lactate from methylglyoxal: step 2/2. In terms of biological role, thiolesterase that catalyzes the hydrolysis of S-D-lactoyl-glutathione to form glutathione and D-lactic acid. The sequence is that of Hydroxyacylglutathione hydrolase, mitochondrial (HAGH) from Callithrix jacchus (White-tufted-ear marmoset).